The sequence spans 211 residues: Molybdenum cofactor guanylyltransferase (211 aa).

GTP contacts are provided by residues 12 to 14 (LAG), lysine 25, asparagine 53, aspartate 71, and aspartate 101. Aspartate 101 serves as a coordination point for Mg(2+).

Belongs to the MobA family. In terms of assembly, monomer. Mg(2+) is required as a cofactor.

The protein localises to the cytoplasm. The enzyme catalyses Mo-molybdopterin + GTP + H(+) = Mo-molybdopterin guanine dinucleotide + diphosphate. Transfers a GMP moiety from GTP to Mo-molybdopterin (Mo-MPT) cofactor (Moco or molybdenum cofactor) to form Mo-molybdopterin guanine dinucleotide (Mo-MGD) cofactor. This chain is Molybdenum cofactor guanylyltransferase, found in Acidovorax ebreus (strain TPSY) (Diaphorobacter sp. (strain TPSY)).